We begin with the raw amino-acid sequence, 502 residues long: ATP synthase subunit alpha (502 aa).

An ATP-binding site is contributed by 169-176 (GDRATGKT).

It belongs to the ATPase alpha/beta chains family. F-type ATPases have 2 components, CF(1) - the catalytic core - and CF(0) - the membrane proton channel. CF(1) has five subunits: alpha(3), beta(3), gamma(1), delta(1), epsilon(1). CF(0) has three main subunits: a(1), b(2) and c(9-12). The alpha and beta chains form an alternating ring which encloses part of the gamma chain. CF(1) is attached to CF(0) by a central stalk formed by the gamma and epsilon chains, while a peripheral stalk is formed by the delta and b chains.

Its subcellular location is the cell inner membrane. The enzyme catalyses ATP + H2O + 4 H(+)(in) = ADP + phosphate + 5 H(+)(out). Its function is as follows. Produces ATP from ADP in the presence of a proton gradient across the membrane. The alpha chain is a regulatory subunit. The chain is ATP synthase subunit alpha from Hydrogenobaculum sp. (strain Y04AAS1).